We begin with the raw amino-acid sequence, 114 residues long: Transmembrane protein 14DP (114 aa).

A run of 4 helical transmembrane segments spans residues 8–28, 36–56, 63–80, and 83–103; these read LVPL…GGIV, APSL…AYQL, VWDF…IMGM, and YYYG…LMAA.

It belongs to the TMEM14 family.

It localises to the membrane. This chain is Transmembrane protein 14DP (TMEM14DP), found in Homo sapiens (Human).